The following is a 164-amino-acid chain: FMN reductase (NADH) RutF (164 aa).

It belongs to the non-flavoprotein flavin reductase family. RutF subfamily.

The enzyme catalyses FMNH2 + NAD(+) = FMN + NADH + 2 H(+). Its function is as follows. Catalyzes the reduction of FMN to FMNH2 which is used to reduce pyrimidine by RutA via the Rut pathway. This is FMN reductase (NADH) RutF from Klebsiella pneumoniae subsp. pneumoniae (strain ATCC 700721 / MGH 78578).